The following is a 71-amino-acid chain: Small, acid-soluble spore protein I (71 aa).

It belongs to the SspI family.

It is found in the spore core. In Bacillus velezensis (strain DSM 23117 / BGSC 10A6 / LMG 26770 / FZB42) (Bacillus amyloliquefaciens subsp. plantarum), this protein is Small, acid-soluble spore protein I.